The primary structure comprises 676 residues: Hypermethylated in cancer 1 protein (676 aa).

The tract at residues 1–27 is disordered; it reads APGARPAASRERGHKSREERCGERGAA. Residues 8-23 show a composition bias toward basic and acidic residues; sequence ASRERGHKSREERCGE. Residues 63-126 form the BTB domain; the sequence is CDVIIVVQNA…IYTGRLGECE (64 aa). Residues 241-245 are binding to CtBP; the sequence is GLDLS. Disordered stretches follow at residues 264–326 and 342–405; these read PAEP…LPRG and GPYL…DRYC. 2 stretches are compositionally biased toward basic and acidic residues: residues 266 to 278 and 351 to 361; these read EPRE…RHDS and EKELEREEKAE. The span at 384–398 shows a compositional bias: low complexity; it reads STSEETGSSEGPSPG. C2H2-type zinc fingers lie at residues 420-447, 474-501, 502-529, 530-557, and 558-585; these read YVCI…EEEL, YRCS…LTRP, YPCT…GLKP, FACD…GEKP, and YECQ…AGPD.

The protein belongs to the krueppel C2H2-type zinc-finger protein family. Hic subfamily. Interacts with CtBP. In terms of tissue distribution, isoform 1 is highly expressed in kidney and lung. Expression of isoform 2 is higher in the lens, retina and stomach, and extremely low in heart, muscle, kidney and lung. Isoform 3 is weakly expressed in heart, kidney and lens.

The protein localises to the nucleus. In terms of biological role, binds specifically to the gamma F-1-binding motif of the gamma F-crystallin promoter. May have a regulatory role in sclerotome specification and/or differentiation. Isoform 2 functions as a transcriptional repressor in lens cells. This chain is Hypermethylated in cancer 1 protein (HIC1), found in Gallus gallus (Chicken).